Reading from the N-terminus, the 874-residue chain is Alanine--tRNA ligase (874 aa).

His563, His567, Cys665, and His669 together coordinate Zn(2+).

This sequence belongs to the class-II aminoacyl-tRNA synthetase family. It depends on Zn(2+) as a cofactor.

It is found in the cytoplasm. It catalyses the reaction tRNA(Ala) + L-alanine + ATP = L-alanyl-tRNA(Ala) + AMP + diphosphate. Its function is as follows. Catalyzes the attachment of alanine to tRNA(Ala) in a two-step reaction: alanine is first activated by ATP to form Ala-AMP and then transferred to the acceptor end of tRNA(Ala). Also edits incorrectly charged Ser-tRNA(Ala) and Gly-tRNA(Ala) via its editing domain. In Haemophilus influenzae (strain PittGG), this protein is Alanine--tRNA ligase.